We begin with the raw amino-acid sequence, 1238 residues long: MSTSAKKTPESKTEDKIEPVIEQTSNDKPEPPPNKVDSVITVPTSLINQVIQTASLQENGIVALLNHARYISDINNIHVQSAETHPVPAVGLLGSPSLVSLKYTSTHSSVEFPTTTPHFYAARPIPSDNTSELLRIPPVNVVCDPFPFIPGMAKQYSVSNYNVRLMIDVSHPGIEMIIDPFSISNTKITVDGIQAFDINAFSGGLITDANSGFGSRGMPYIFSLISGLLAVSRKIGRFVMIDNIGNEKNRVLTDRIECPTVPGLSHMRGRFLKDDYERYPHVFEAIPLVTNLPWFRREIEDNVTTVPFGTNHSIPPPNVSNMKVAEYVYCGTDVTMAQFHSNFLDEVSSLRFSHVQYIRLLNSLVVNRNEITGYTTLLQFREYSAAHVPLQLSALDYSTFPYDRRTSDCLRFMVHYSAAFRVAFSDFTSSLISSIIQQSEIKTAADFNATHTGMGNTINNSTTSFHEVLRGFLENIRPTTSHDITRALSLEFFPSFYDLAPTSTHYGAVMATTFLTDLLTLAMTFVMHPVTYSYNPHLKAYAILEFCQAYFNQEVETLLQQSGWGTNVTGIVITDVPSIAPSRIESGVYSFTLLQPVNLQPLVPPPMWNLFTRTLAFLNAPFQTYTVSRPAIAYAQARNVVIPGVPIVPSGPYSRAPPVATYLLSVIQLATTYTTISKQVGLGMSTSKLAAAMTSWRVVVRAMILNFGEWFHGVYCFAAYNAALLYRLIMPYDNTPPTNWQAFPSVQEDLARLNLHNIHNAPRIIPTQAMFPHDDTRTVLGPKHMHSILALYHTPSSAHVCGKLNADKTVADWPDLVSFYYGIDPQEIVEIYKTVLNLASSFGESIQLSSEMSTGDLLSPDLRVLLRSGIMAKVFSARTFQLFAKFLGVGVTDGSIMSQSGSLIDMFNTDPRIYFPNTGMTTVFTDQLIQSNPVGDMIRPAVRNNFRILLDSVFGPEGMMPITSGFTASLEMHSNLRFSLTHSIRQVEIIFGTGHQVQYDDGLRGLHIFSCTANQIDATGQRVPIGNMIAFAHIEQLIDNLSTIVGYSVVRPIAIVPEINQLPAVLVEDIITAFLGNVICLSFPEHRVVRSYAYLSPASVVAATQLERNLVREILEDRTVTHCHHIRIFDTEIIQGVFETTMRKPLLPQRPKCPVELTTHLHTPNARVGGTPINFDRFLPLVEVDASGRLLATNQRGVKRDAITTRPYALRTPLLVWMQSPYQKLEGTVHSQTVRVGI.

The segment at 1 to 35 is disordered; that stretch reads MSTSAKKTPESKTEDKIEPVIEQTSNDKPEPPPNK. Basic and acidic residues predominate over residues 7–30; that stretch reads KTPESKTEDKIEPVIEQTSNDKPE.

It belongs to the turreted BTV-fold inner capsid family. In terms of assembly, homodecamer; each decamer is made up of two conformers of VP2, called VP2A and VP2B. 12 homodecamers assemble to form an icosahedral capsid.

Its subcellular location is the virion. Functionally, inner capsid protein that self-assembles to form an icosahedral capsid with a T=2 symmetry, which consists of 120 copies of VP2, with channels at each of its five-fold vertices. This capsid constitutes the innermost concentric layer of the viral mature particle. The polypeptide is Inner capsid protein VP2 (S2) (Cryphonectria parasitica (Chestnut blight fungus)).